We begin with the raw amino-acid sequence, 311 residues long: Olfactory receptor 8H1 (311 aa).

Over 1–25 (MGRRNNTNVPDFILTGLSDSEEVQM) the chain is Extracellular. The N-linked (GlcNAc...) asparagine glycan is linked to Asn-5. The helical transmembrane segment at 26–46 (ALFILFLLIYLITMLGNVGMI) threads the bilayer. The Cytoplasmic segment spans residues 47-54 (LIIRLDLQ). The helical transmembrane segment at 55–75 (LHTPMYFFLTHLSFIDLSYST) threads the bilayer. The Extracellular segment spans residues 76 to 98 (VITPKTLANLLTSNYISFMGCFA). A disulfide bridge connects residues Cys-96 and Cys-188. The chain crosses the membrane as a helical span at residues 99–119 (QMFFFVFLGAAECFLLSSMAY). The Cytoplasmic portion of the chain corresponds to 120–138 (DRYVAICSPLRYPVIMSKR). The chain crosses the membrane as a helical span at residues 139–159 (LCCALVTGPYVISFINSFVNV). Residues 160–196 (VWMSRLHFCDSNVVRHFFCDTSPILALSCMDTYDIEI) are Extracellular-facing. A helical membrane pass occupies residues 197–216 (MIHILAGSTLMVSLITISAS). The Cytoplasmic portion of the chain corresponds to 217-236 (YVSILSTILKINSTSGKQKA). A helical transmembrane segment spans residues 237–257 (LSTCASHLLGVTIFYGTMIFT). Residues 258–270 (YLKPRKSYSLGRD) are Extracellular-facing. Residues 271–291 (QVASVFYTIVIPMLNPLIYSL) traverse the membrane as a helical segment. The Cytoplasmic portion of the chain corresponds to 292–311 (RNKEVKNALIRVMQRRQDSR).

The protein belongs to the G-protein coupled receptor 1 family.

Its subcellular location is the cell membrane. Its function is as follows. Odorant receptor. The sequence is that of Olfactory receptor 8H1 (OR8H1) from Homo sapiens (Human).